The chain runs to 257 residues: Snake venom serine protease KN8 (257 aa).

A signal peptide spans Met-1–Ala-18. Positions Gln-19 to Leu-24 are excised as a propeptide. In terms of domain architecture, Peptidase S1 spans Val-25–Ala-248. 5 disulfide bridges follow: Cys-31-Cys-162, Cys-49-Cys-65, Cys-141-Cys-209, Cys-173-Cys-188, and Cys-199-Cys-224. The active-site Charge relay system is His-64. An N-linked (GlcNAc...) asparagine glycan is attached at Asn-102. Asp-109 (charge relay system) is an active-site residue. N-linked (GlcNAc...) asparagine glycosylation is found at Asn-120 and Asn-121. Ser-203 functions as the Charge relay system in the catalytic mechanism.

The protein belongs to the peptidase S1 family. Snake venom subfamily. As to quaternary structure, monomer. As to expression, expressed by the venom gland.

Its subcellular location is the secreted. In terms of biological role, snake venom serine protease that may act in the hemostasis system of the prey. In Trimeresurus stejnegeri (Chinese green tree viper), this protein is Snake venom serine protease KN8.